The sequence spans 121 residues: Small ribosomal subunit protein uS13 (121 aa).

The segment at 97–121 is disordered; the sequence is VRGQRTRTNARTRRGARKTVAGKKK. Positions 100–121 are enriched in basic residues; that stretch reads QRTRTNARTRRGARKTVAGKKK.

It belongs to the universal ribosomal protein uS13 family. Part of the 30S ribosomal subunit. Forms a loose heterodimer with protein S19. Forms two bridges to the 50S subunit in the 70S ribosome.

Functionally, located at the top of the head of the 30S subunit, it contacts several helices of the 16S rRNA. In the 70S ribosome it contacts the 23S rRNA (bridge B1a) and protein L5 of the 50S subunit (bridge B1b), connecting the 2 subunits; these bridges are implicated in subunit movement. Contacts the tRNAs in the A and P-sites. This chain is Small ribosomal subunit protein uS13, found in Synechococcus sp. (strain CC9605).